The primary structure comprises 337 residues: Protein RETICULATA-RELATED 3, chloroplastic (337 aa).

The transit peptide at 1 to 59 (MAAMAAKLQLSAKSDQSSVRLPRVINLSRDPTTRVSFPRNGSVCSLHTNFSSPHLAKPC) directs the protein to the chloroplast. Residues 70–89 (NNGGGSGSGGGGGGFGGSGG) are compositionally biased toward gly residues. The interval 70 to 96 (NNGGGSGSGGGGGGFGGSGGEASEESS) is disordered. Helical transmembrane passes span 151-171 (FVFS…YMLA) and 216-236 (VFAS…NGLI).

Belongs to the RETICULATA family. In terms of tissue distribution, expressed in root meristem, root vasculature, distal region of young leaf primordia, leaf bundle sheath cells, hydathodes and pollen grains.

It is found in the plastid. Its subcellular location is the chloroplast membrane. Its function is as follows. May play a role in leaf development. Required for leaf mesophyll cell division in the early stages of leaf organogenesis. The chain is Protein RETICULATA-RELATED 3, chloroplastic from Arabidopsis thaliana (Mouse-ear cress).